The chain runs to 536 residues: Chaperonin GroEL 1 (536 aa).

Residues Thr-29 to Pro-32, Asp-86 to Thr-90, Gly-413, Asn-476 to Ala-478, and Asp-492 contribute to the ATP site.

The protein belongs to the chaperonin (HSP60) family. Forms a cylinder of 14 subunits composed of two heptameric rings stacked back-to-back. Interacts with the co-chaperonin GroES.

Its subcellular location is the cytoplasm. It carries out the reaction ATP + H2O + a folded polypeptide = ADP + phosphate + an unfolded polypeptide.. Its function is as follows. Together with its co-chaperonin GroES, plays an essential role in assisting protein folding. The GroEL-GroES system forms a nano-cage that allows encapsulation of the non-native substrate proteins and provides a physical environment optimized to promote and accelerate protein folding. This chain is Chaperonin GroEL 1, found in Nocardia farcinica (strain IFM 10152).